We begin with the raw amino-acid sequence, 460 residues long: tRNA modification GTPase MnmE (460 aa).

(6S)-5-formyl-5,6,7,8-tetrahydrofolate is bound by residues arginine 29, glutamate 91, and lysine 132. A TrmE-type G domain is found at 227 to 383; it reads GISIALIGKT…LIDTIIKKCG (157 aa). Residue asparagine 237 participates in K(+) binding. Residues 237 to 242, 256 to 262, and 281 to 284 each bind GTP; these read NVGKSS, TNIPGTT, and DTAG. Position 241 (serine 241) interacts with Mg(2+). Residues threonine 256, isoleucine 258, and threonine 261 each coordinate K(+). Threonine 262 provides a ligand contact to Mg(2+). Lysine 460 is a binding site for (6S)-5-formyl-5,6,7,8-tetrahydrofolate.

Belongs to the TRAFAC class TrmE-Era-EngA-EngB-Septin-like GTPase superfamily. TrmE GTPase family. As to quaternary structure, homodimer. Heterotetramer of two MnmE and two MnmG subunits. The cofactor is K(+).

It localises to the cytoplasm. Its function is as follows. Exhibits a very high intrinsic GTPase hydrolysis rate. Involved in the addition of a carboxymethylaminomethyl (cmnm) group at the wobble position (U34) of certain tRNAs, forming tRNA-cmnm(5)s(2)U34. This is tRNA modification GTPase MnmE from Prochlorococcus marinus (strain MIT 9215).